A 361-amino-acid polypeptide reads, in one-letter code: Phenylalanine--tRNA ligase alpha subunit (361 aa).

E260 is a Mg(2+) binding site.

Belongs to the class-II aminoacyl-tRNA synthetase family. Phe-tRNA synthetase alpha subunit type 1 subfamily. Tetramer of two alpha and two beta subunits. Mg(2+) is required as a cofactor.

The protein resides in the cytoplasm. It carries out the reaction tRNA(Phe) + L-phenylalanine + ATP = L-phenylalanyl-tRNA(Phe) + AMP + diphosphate + H(+). This chain is Phenylalanine--tRNA ligase alpha subunit, found in Bartonella henselae (strain ATCC 49882 / DSM 28221 / CCUG 30454 / Houston 1) (Rochalimaea henselae).